Consider the following 497-residue polypeptide: MFNKIIKLGQKKFNKSDQHHQDNNNNNNNTSTNTVVRGSRTTTPAPSSVSNGESQTTAQSPSQTPNHPMFTTTPILEVLPLLKDVSSSDRPLLFMKKAHMCSCHCDFSDTLIMPREKEIKRQTLLELVDFLHSSSGKVNETMQSELIRMVSANIFRCLPPAYHENTGAPPEGNDPEEEEPYLEPWWPHLQLVYELLLRYVVSSEIEPKTAKKFINHTFVSRLLDLFDSEDPREREYLKTVLHRIYGKFIFHRPFIRCSIYNIFYKFLYETERCIGIGELLEILGSVINGFTVPMREEHRLYLVKAILPLHKSKGISIYHQQLAYCVTQFVEKDYKLADTVIRGLLKFWPLTNCQKEVLFLGELEEVLDATEPSEFQQCVVPLFTQIGKCLNSAHFQVAERALFLWNNEHIVGLIAQNKDVIFPIIFEALERNMKGHWNQAVHGLSENVRRMFLEMDTELFEECEKQYLENEAKACELLEQRELTWKRLEEAASLAAN.

The disordered stretch occupies residues 12 to 71 (KFNKSDQHHQDNNNNNNNTSTNTVVRGSRTTTPAPSSVSNGESQTTAQSPSQTPNHPMFT). Residues 23-34 (NNNNNNNTSTNT) are compositionally biased toward low complexity. Residues 35-71 (VVRGSRTTTPAPSSVSNGESQTTAQSPSQTPNHPMFT) are compositionally biased toward polar residues.

The protein belongs to the phosphatase 2A regulatory subunit B56 family. In terms of assembly, PP2A consists of a common heteromeric enzyme, composed of a catalytic subunit (subunits C), a constant regulatory subunit (subunit A), and a variety of regulatory subunits such as subunits B (the R2/B/PR55/B55, R3/B''/PR72/PR130/PR59 and R5/B'/B56 families). In terms of tissue distribution, expressed ubiquitously.

It localises to the cytoplasm. The B regulatory subunit may modulate substrate selectivity and catalytic activity, and may also direct the localization of the catalytic enzyme to a particular subcellular compartment. The polypeptide is Serine/threonine protein phosphatase 2A 57 kDa regulatory subunit B' epsilon isoform (B'EPSILON) (Arabidopsis thaliana (Mouse-ear cress)).